The sequence spans 282 residues: Pantothenate synthetase (282 aa).

30–37 (MGYLHEGH) contributes to the ATP binding site. Catalysis depends on H37, which acts as the Proton donor. Position 61 (Q61) interacts with (R)-pantoate. Q61 contacts beta-alanine. Position 147 to 150 (147 to 150 (GMKD)) interacts with ATP. Q153 is a (R)-pantoate binding site. ATP-binding positions include V176 and 184-187 (KSSR).

The protein belongs to the pantothenate synthetase family. Homodimer.

Its subcellular location is the cytoplasm. It catalyses the reaction (R)-pantoate + beta-alanine + ATP = (R)-pantothenate + AMP + diphosphate + H(+). The protein operates within cofactor biosynthesis; (R)-pantothenate biosynthesis; (R)-pantothenate from (R)-pantoate and beta-alanine: step 1/1. In terms of biological role, catalyzes the condensation of pantoate with beta-alanine in an ATP-dependent reaction via a pantoyl-adenylate intermediate. In Bacillus anthracis (strain A0248), this protein is Pantothenate synthetase.